A 285-amino-acid polypeptide reads, in one-letter code: MEMO1 family protein Igni_0992 (285 aa).

This sequence belongs to the MEMO1 family.

The chain is MEMO1 family protein Igni_0992 from Ignicoccus hospitalis (strain KIN4/I / DSM 18386 / JCM 14125).